Here is a 141-residue protein sequence, read N- to C-terminus: Nucleoside diphosphate kinase (141 aa).

Positions 11, 59, 87, 93, 104, and 114 each coordinate ATP. Residue H117 is the Pros-phosphohistidine intermediate of the active site.

It belongs to the NDK family. Homotetramer. The cofactor is Mg(2+).

The protein resides in the cytoplasm. It catalyses the reaction a 2'-deoxyribonucleoside 5'-diphosphate + ATP = a 2'-deoxyribonucleoside 5'-triphosphate + ADP. The catalysed reaction is a ribonucleoside 5'-diphosphate + ATP = a ribonucleoside 5'-triphosphate + ADP. In terms of biological role, major role in the synthesis of nucleoside triphosphates other than ATP. The ATP gamma phosphate is transferred to the NDP beta phosphate via a ping-pong mechanism, using a phosphorylated active-site intermediate. This chain is Nucleoside diphosphate kinase, found in Histophilus somni (strain 129Pt) (Haemophilus somnus).